Reading from the N-terminus, the 223-residue chain is MESDRFDYLFKFLIIGNAGTGKTCILRRYTERKFFPNTQHTIGAEFGSRVISVDGTHVKIQIWDTAGQERFRSMARSYYHDAVGTLLVYDITNRTSFGAVEQWLGDARHLATPGVVVILVGNKKDLRDTDGQVTHWEANTFAQENGLQFIETSALTGENIDDAFTSCVRVLLSKVKSGELGADRLLVGSNKQHLQAVNLTASATSVSASQSSAATAHSDTCLC.

Gly-16–Thr-23 contacts GTP. The Effector region signature appears at Thr-38–Phe-46. GTP-binding positions include Asp-64–Gln-68 and Asn-122–Asp-125. S-geranylgeranyl cysteine attachment occurs at residues Cys-221 and Cys-223. At Cys-223 the chain carries Cysteine methyl ester.

It belongs to the small GTPase superfamily. Rab family.

The protein resides in the cell membrane. In terms of biological role, protein transport. Probably involved in vesicular traffic. In Echinococcus multilocularis (Fox tapeworm), this protein is Probable Ras-related protein Rab-4A.